The following is a 494-amino-acid chain: Cytochrome P450 2A3 (494 aa).

At serine 131 the chain carries Phosphoserine. Lysine 379 carries the N6-acetyllysine modification. Residue cysteine 439 participates in heme binding.

The protein belongs to the cytochrome P450 family. Heme serves as cofactor. As to expression, lung.

Its subcellular location is the endoplasmic reticulum membrane. It is found in the microsome membrane. It catalyses the reaction an organic molecule + reduced [NADPH--hemoprotein reductase] + O2 = an alcohol + oxidized [NADPH--hemoprotein reductase] + H2O + H(+). Functionally, cytochromes P450 are a group of heme-thiolate monooxygenases. In liver microsomes, this enzyme is involved in an NADPH-dependent electron transport pathway. It oxidizes a variety of structurally unrelated compounds, including steroids, fatty acids, and xenobiotics. In Rattus norvegicus (Rat), this protein is Cytochrome P450 2A3 (Cyp2a3).